A 275-amino-acid polypeptide reads, in one-letter code: 2,3,4,5-tetrahydropyridine-2,6-dicarboxylate N-succinyltransferase (275 aa).

Substrate contacts are provided by R106 and D143.

It belongs to the transferase hexapeptide repeat family. In terms of assembly, homotrimer.

The protein resides in the cytoplasm. The enzyme catalyses (S)-2,3,4,5-tetrahydrodipicolinate + succinyl-CoA + H2O = (S)-2-succinylamino-6-oxoheptanedioate + CoA. It functions in the pathway amino-acid biosynthesis; L-lysine biosynthesis via DAP pathway; LL-2,6-diaminopimelate from (S)-tetrahydrodipicolinate (succinylase route): step 1/3. In Burkholderia ambifaria (strain ATCC BAA-244 / DSM 16087 / CCUG 44356 / LMG 19182 / AMMD) (Burkholderia cepacia (strain AMMD)), this protein is 2,3,4,5-tetrahydropyridine-2,6-dicarboxylate N-succinyltransferase.